Reading from the N-terminus, the 261-residue chain is Kallikrein 1-related peptidase b26 (261 aa).

A signal peptide spans 1–18 (MWFLILFPALSLGGIDAA). The propeptide at 19 to 24 (PPLQSR) is activation peptide. The Peptidase S1 domain maps to 25–258 (VVGGFNCEKN…FNSWIKDTMM (234 aa)). Intrachain disulfides connect Cys-31–Cys-173, Cys-50–Cys-66, Cys-152–Cys-219, Cys-184–Cys-198, and Cys-209–Cys-234. His-65 functions as the Charge relay system in the catalytic mechanism. N-linked (GlcNAc...) asparagine glycosylation occurs at Asn-102. Asp-120 functions as the Charge relay system in the catalytic mechanism. Ser-213 (charge relay system) is an active-site residue.

Belongs to the peptidase S1 family. Kallikrein subfamily.

It carries out the reaction Preferential cleavage of Arg-|-Xaa bonds in small molecule substrates. Highly selective action to release kallidin (lysyl-bradykinin) from kininogen involves hydrolysis of Met-|-Xaa or Leu-|-Xaa.. In terms of biological role, glandular kallikreins cleave Met-Lys and Arg-Ser bonds in kininogen to release Lys-bradykinin. Its function is as follows. Prorenin-converting enzyme cleaves mouse REN-2 prorenin at a dibasic site to yield mature renin. The polypeptide is Kallikrein 1-related peptidase b26 (Klk1b26) (Mus musculus (Mouse)).